The following is a 275-amino-acid chain: Formamidopyrimidine-DNA glycosylase (275 aa).

Pro2 serves as the catalytic Schiff-base intermediate with DNA. Glu3 functions as the Proton donor in the catalytic mechanism. Lys60 functions as the Proton donor; for beta-elimination activity in the catalytic mechanism. The DNA site is built by His93 and Arg112. The FPG-type zinc finger occupies 240–274 (FVYGRKDEPCKKCGSPIEKTVVGGRGTHFCIKCQK). Arg264 (proton donor; for delta-elimination activity) is an active-site residue.

Belongs to the FPG family. Monomer. Zn(2+) serves as cofactor.

It catalyses the reaction Hydrolysis of DNA containing ring-opened 7-methylguanine residues, releasing 2,6-diamino-4-hydroxy-5-(N-methyl)formamidopyrimidine.. The catalysed reaction is 2'-deoxyribonucleotide-(2'-deoxyribose 5'-phosphate)-2'-deoxyribonucleotide-DNA = a 3'-end 2'-deoxyribonucleotide-(2,3-dehydro-2,3-deoxyribose 5'-phosphate)-DNA + a 5'-end 5'-phospho-2'-deoxyribonucleoside-DNA + H(+). Involved in base excision repair of DNA damaged by oxidation or by mutagenic agents. Acts as a DNA glycosylase that recognizes and removes damaged bases. Has a preference for oxidized purines, such as 7,8-dihydro-8-oxoguanine (8-oxoG). Has AP (apurinic/apyrimidinic) lyase activity and introduces nicks in the DNA strand. Cleaves the DNA backbone by beta-delta elimination to generate a single-strand break at the site of the removed base with both 3'- and 5'-phosphates. This is Formamidopyrimidine-DNA glycosylase from Bacillus licheniformis (strain ATCC 14580 / DSM 13 / JCM 2505 / CCUG 7422 / NBRC 12200 / NCIMB 9375 / NCTC 10341 / NRRL NRS-1264 / Gibson 46).